The chain runs to 469 residues: Bifunctional protein GlmU (469 aa).

A pyrophosphorylase region spans residues 1-237 (MTTNRKFAIA…SHEVLGVNTR (237 aa)). UDP-N-acetyl-alpha-D-glucosamine-binding positions include 12–15 (LAAG), K26, Q78, 83–84 (GT), 105–107 (SGD), G144, E162, N177, and N235. D107 serves as a coordination point for Mg(2+). N235 is a Mg(2+) binding site. Positions 238–258 (QDLASLDAHLRLQKCQQLMSA) are linker. Residues 259–469 (GVSIFKPETC…KKRAEQKKKK (211 aa)) form an N-acetyltransferase region. UDP-N-acetyl-alpha-D-glucosamine contacts are provided by R341 and K359. Residue H371 is the Proton acceptor of the active site. Y374 and N385 together coordinate UDP-N-acetyl-alpha-D-glucosamine. Acetyl-CoA-binding positions include A388, 394–395 (NY), S413, A431, and R448.

In the N-terminal section; belongs to the N-acetylglucosamine-1-phosphate uridyltransferase family. It in the C-terminal section; belongs to the transferase hexapeptide repeat family. Homotrimer. The cofactor is Mg(2+).

The protein localises to the cytoplasm. It carries out the reaction alpha-D-glucosamine 1-phosphate + acetyl-CoA = N-acetyl-alpha-D-glucosamine 1-phosphate + CoA + H(+). The enzyme catalyses N-acetyl-alpha-D-glucosamine 1-phosphate + UTP + H(+) = UDP-N-acetyl-alpha-D-glucosamine + diphosphate. Its pathway is nucleotide-sugar biosynthesis; UDP-N-acetyl-alpha-D-glucosamine biosynthesis; N-acetyl-alpha-D-glucosamine 1-phosphate from alpha-D-glucosamine 6-phosphate (route II): step 2/2. It participates in nucleotide-sugar biosynthesis; UDP-N-acetyl-alpha-D-glucosamine biosynthesis; UDP-N-acetyl-alpha-D-glucosamine from N-acetyl-alpha-D-glucosamine 1-phosphate: step 1/1. The protein operates within bacterial outer membrane biogenesis; LPS lipid A biosynthesis. Catalyzes the last two sequential reactions in the de novo biosynthetic pathway for UDP-N-acetylglucosamine (UDP-GlcNAc). The C-terminal domain catalyzes the transfer of acetyl group from acetyl coenzyme A to glucosamine-1-phosphate (GlcN-1-P) to produce N-acetylglucosamine-1-phosphate (GlcNAc-1-P), which is converted into UDP-GlcNAc by the transfer of uridine 5-monophosphate (from uridine 5-triphosphate), a reaction catalyzed by the N-terminal domain. In Koribacter versatilis (strain Ellin345), this protein is Bifunctional protein GlmU.